The chain runs to 935 residues: Isoleucine--tRNA ligase (935 aa).

A 'HIGH' region motif is present at residues 58-68 (PYANGSIHVGH). Glu558 provides a ligand contact to L-isoleucyl-5'-AMP. The 'KMSKS' region motif lies at 599 to 603 (KMSKS). An ATP-binding site is contributed by Lys602. Positions 897, 900, 917, and 920 each coordinate Zn(2+).

It belongs to the class-I aminoacyl-tRNA synthetase family. IleS type 1 subfamily. Monomer. Zn(2+) serves as cofactor.

Its subcellular location is the cytoplasm. The catalysed reaction is tRNA(Ile) + L-isoleucine + ATP = L-isoleucyl-tRNA(Ile) + AMP + diphosphate. Functionally, catalyzes the attachment of isoleucine to tRNA(Ile). As IleRS can inadvertently accommodate and process structurally similar amino acids such as valine, to avoid such errors it has two additional distinct tRNA(Ile)-dependent editing activities. One activity is designated as 'pretransfer' editing and involves the hydrolysis of activated Val-AMP. The other activity is designated 'posttransfer' editing and involves deacylation of mischarged Val-tRNA(Ile). This Francisella tularensis subsp. novicida (strain U112) protein is Isoleucine--tRNA ligase.